The following is an 811-amino-acid chain: Receptor-like protein 52 (811 aa).

Residues 1–22 (MTFLPLLFIFFFLTSIPFPAFS) form the signal peptide. Residues 23–770 (QYNDRSTLLN…EDEEEVMNWT (748 aa)) lie on the Extracellular side of the membrane. Residues Asn47, Asn64, Asn74, Asn93, Asn109, and Asn124 are each glycosylated (N-linked (GlcNAc...) asparagine). LRR repeat units follow at residues 62–86 (AGNV…ICNF), 87–110 (PNLK…LYNC), 112–134 (KLQY…INRL), 135–159 (APKL…IGRI), 161–183 (KLKV…IGDL), and 184–208 (SELE…EFGK). The stretch at 211–233 (KLKYMWLEEMNLIGEISAVVFEN) is one LRR 7; degenerate repeat. Asn233, Asn246, Asn260, Asn295, and Asn304 each carry an N-linked (GlcNAc...) asparagine glycan. 8 LRR repeats span residues 234 to 258 (MTDL…LFGL), 260 to 281 (NLTE…SISA), 282 to 305 (KNLV…IGNL), 307 to 329 (NLEL…IGKL), 330 to 354 (PELK…GFIS), 356 to 377 (LERF…LCHG), 379 to 401 (KLQS…LGDC), and 403 to 427 (TLSS…TRSN). N-linked (GlcNAc...) asparagine glycans are attached at residues Asn389, Asn422, Asn429, Asn455, Asn464, and Asn485. 10 LRR repeats span residues 441-465 (LHSL…IANL), 466-489 (STLE…ISTS), 491-511 (KSID…LVRI), 512-537 (SSLE…SMQQ), 539-557 (QVLV…QNGF), 558-581 (SKLR…FFVN), 625-649 (LNTF…VGLL), 650-673 (KELH…MGNL), 674-697 (IELE…LGKL), and 699-722 (YLAY…QFQT). An N-linked (GlcNAc...) asparagine glycan is attached at Asn525. Asn571 and Asn581 each carry an N-linked (GlcNAc...) asparagine glycan. The N-linked (GlcNAc...) asparagine glycan is linked to Asn656. A glycan (N-linked (GlcNAc...) asparagine) is linked at Asn704. Residues 771–791 (AAAIGSIPGISIGLTMGYILV) form a helical membrane-spanning segment. Residues 792-811 (SYKPEWLMNSGRNKRRIKPI) are Cytoplasmic-facing.

Belongs to the RLP family.

The protein resides in the cell membrane. In terms of biological role, required for defense against powdery mildew pathogen. This chain is Receptor-like protein 52, found in Arabidopsis thaliana (Mouse-ear cress).